We begin with the raw amino-acid sequence, 395 residues long: Neuromedin-U receptor 2 (395 aa).

Residues 1-41 (MGKLENASWIHDPLMKYLNSTEEYLAHLCGPKRSDLSLPVS) lie on the Extracellular side of the membrane. N-linked (GlcNAc...) asparagine glycans are attached at residues asparagine 6 and asparagine 19. A helical membrane pass occupies residues 42-62 (VAYALIFLVGVMGNLLVCMVI). The Cytoplasmic segment spans residues 63–74 (VRHQTLKTPTNY). The chain crosses the membrane as a helical span at residues 75-95 (YLFSLAVSDLLVLLLGMPLEI). The Extracellular segment spans residues 96–115 (YEMWHNYPFLFGPVGCYFKT). The cysteines at positions 111 and 196 are disulfide-linked. The helical transmembrane segment at 116–138 (ALFETVCFASILSVTTVSVERYV) threads the bilayer. Residues 139–157 (AIVHPFRAKLESTRRRALR) are Cytoplasmic-facing. A helical membrane pass occupies residues 158–178 (ILSLVWSFSVVFSLPNTSIHG). Topologically, residues 179 to 212 (IKFQHFPNGSSVPGSATCTVTKPMWVYNLIIQAT) are extracellular. Asparagine 186 is a glycosylation site (N-linked (GlcNAc...) asparagine). Residues 213–233 (SFLFYILPMTLISVLYYLMGL) traverse the membrane as a helical segment. Over 234–257 (RLKRDESLEANKVAVNIHRPSRKS) the chain is Cytoplasmic. Residues 258 to 278 (VTKMLFVLVLVFAICWTPFHV) traverse the membrane as a helical segment. The Extracellular segment spans residues 279–293 (DRLFFSFVEEWTESL). Residues 294–314 (AAVFNLIHVVSGVFFYLSSAV) traverse the membrane as a helical segment. The Cytoplasmic portion of the chain corresponds to 315–395 (NPIIYNLLSR…TTAPCAGEVP (81 aa)). The interval 374–395 (FPGQSSIHNTNLTTAPCAGEVP) is disordered. The segment covering 375 to 387 (PGQSSIHNTNLTT) has biased composition (polar residues).

The protein belongs to the G-protein coupled receptor 1 family. In terms of tissue distribution, the highest level is detected in the uterus. In the central nervous system, high expression levels were found in the hypothalamus and moderate levels in both the medulla oblongata and spinal cord. Expressed in the hypothalamic paraventricular nucleus (PVN) and suprachiasmatic nuclei (SCN) of the hypothalamus. Expression is low in the gastrointestinal tract. In other peripheral tissues, moderate expression was observed in the lung and ovary.

The protein localises to the cell membrane. In terms of biological role, receptor for the neuromedin-U and neuromedin-S neuropeptides. The polypeptide is Neuromedin-U receptor 2 (Nmur2) (Rattus norvegicus (Rat)).